The chain runs to 457 residues: MGLVEVVWWWRWRFGGGGGGLVVEVEVWWWRWRFGGGGCIMLEIEEERSQCPAEITEDNQTSGCRRQWDNITCWPEAQVGAVVVKPCPKYFRLLTTFLGNVSRNCTSQGWTDVYPAPYAVACGYDSTAHQGKEQTAFYGTVKTGYTIGHTLSLIALTAAMIILCLFRKLHCTRNYIHMHLFMSFIMRAIAVFIKDVTLFESGEPEHCFVSSVGCKAMMVFFQYCVMANFFWLLVEGLYLHTLLVISFFSERKYFWWYILIGWGAPSVFITAWTVVRIYFFNVGCWEEIIESPIWWIIKTPILVSILVNFILFICIIRILVQKLHSPDVGHNETSQYSRLAKSTLLLIPLFGIHYIMFAFFPDNFKAQVKLVFELVVGSFQGFVVAVLYCFLNGEVQAELKRKWRRWHLERFLGSDMKYHHPSLGSNGTNFSTQISMLTKCSPKTRRCSSFQAEFSLV.

Residues 1-19 form the signal peptide; that stretch reads MGLVEVVWWWRWRFGGGGG. Topologically, residues 20-141 are extracellular; it reads GLVVEVEVWW…KEQTAFYGTV (122 aa). 3 disulfides stabilise this stretch: Cys-51/Cys-73, Cys-64/Cys-105, and Cys-87/Cys-122. 4 N-linked (GlcNAc...) asparagine glycosylation sites follow: Asn-59, Asn-70, Asn-100, and Asn-104. A helical transmembrane segment spans residues 142-166; the sequence is KTGYTIGHTLSLIALTAAMIILCLF. At 167 to 173 the chain is on the cytoplasmic side; sequence RKLHCTR. A helical transmembrane segment spans residues 174–193; sequence NYIHMHLFMSFIMRAIAVFI. Over 194-215 the chain is Extracellular; it reads KDVTLFESGEPEHCFVSSVGCK. Cys-214 and Cys-284 are disulfide-bonded. Residues 216 to 239 form a helical membrane-spanning segment; it reads AMMVFFQYCVMANFFWLLVEGLYL. At 240-253 the chain is on the cytoplasmic side; sequence HTLLVISFFSERKY. Residues 254 to 275 traverse the membrane as a helical segment; it reads FWWYILIGWGAPSVFITAWTVV. Residues 276–292 are Extracellular-facing; that stretch reads RIYFFNVGCWEEIIESP. A helical membrane pass occupies residues 293 to 316; the sequence is IWWIIKTPILVSILVNFILFICII. Topologically, residues 317–341 are cytoplasmic; that stretch reads RILVQKLHSPDVGHNETSQYSRLAK. Residues 342–361 traverse the membrane as a helical segment; that stretch reads STLLLIPLFGIHYIMFAFFP. Residues 362–373 lie on the Extracellular side of the membrane; it reads DNFKAQVKLVFE. A helical membrane pass occupies residues 374–393; the sequence is LVVGSFQGFVVAVLYCFLNG. Topologically, residues 394 to 457 are cytoplasmic; that stretch reads EVQAELKRKW…SSFQAEFSLV (64 aa).

This sequence belongs to the G-protein coupled receptor 2 family. Expressed in pituitary, hypothalamus, small intestine and ovarian follicles.

Its subcellular location is the cell membrane. This is a receptor for VIP. The activity of this receptor is mediated by G proteins which activate adenylyl cyclase. In Meleagris gallopavo (Wild turkey), this protein is Vasoactive intestinal polypeptide receptor (VIPR1).